We begin with the raw amino-acid sequence, 463 residues long: Glycine--tRNA ligase (463 aa).

The substrate site is built by arginine 98 and glutamate 174. Residues 206–208 (RNE), 216–221 (FRTREF), 290–291 (EL), and 334–337 (GADR) each bind ATP. 221-225 (FEQME) contacts substrate. 330-334 (EPSLG) lines the substrate pocket.

Belongs to the class-II aminoacyl-tRNA synthetase family. As to quaternary structure, homodimer.

Its subcellular location is the cytoplasm. It catalyses the reaction tRNA(Gly) + glycine + ATP = glycyl-tRNA(Gly) + AMP + diphosphate. Catalyzes the attachment of glycine to tRNA(Gly). The protein is Glycine--tRNA ligase of Staphylococcus haemolyticus (strain JCSC1435).